The sequence spans 145 residues: Large ribosomal subunit protein uL24 (145 aa).

Disordered regions lie at residues 1–21 and 122–145; these read MKFN…HFNA and KAKS…KMQE. K136 participates in a covalent cross-link: Glycyl lysine isopeptide (Lys-Gly) (interchain with G-Cter in SUMO2). T139 carries the phosphothreonine modification.

It belongs to the universal ribosomal protein uL24 family. In terms of assembly, component of the large ribosomal subunit. Interacts with DHX33. Ufmylated by UFL1 in response to endoplasmic reticulum stress, promoting reticulophagy of endoplasmic reticulum sheets.

It is found in the cytoplasm. Component of the large ribosomal subunit. The ribosome is a large ribonucleoprotein complex responsible for the synthesis of proteins in the cell. The polypeptide is Large ribosomal subunit protein uL24 (Rpl26) (Rattus norvegicus (Rat)).